A 564-amino-acid polypeptide reads, in one-letter code: Carbamoyl phosphate synthase large chain, N-terminal section (564 aa).

Residues 1–399 form a carboxyphosphate synthetic domain region; that stretch reads MPETPNKVLI…ALQKAIRSLE (399 aa). Positions 127, 167, 173, 174, 206, 208, 213, 239, 240, 241, 282, and 296 each coordinate ATP. An ATP-grasp domain is found at 131 to 325; the sequence is RAFMKKIGEP…IARIAAKIAI (195 aa). Residues glutamine 282, glutamate 296, and asparagine 298 each coordinate Mg(2+). Positions 282, 296, and 298 each coordinate Mn(2+). The segment at 400-560 is oligomerization domain; sequence IGEPGLGPSP…YSTYEEECEA (161 aa).

It belongs to the CarB family. As to quaternary structure, composed of two chains; the small (or glutamine) chain promotes the hydrolysis of glutamine to ammonia, which is used by the large (or ammonia) chain to synthesize carbamoyl phosphate. Tetramer of heterodimers (alpha,beta)4. The cofactor is Mg(2+). It depends on Mn(2+) as a cofactor.

It catalyses the reaction hydrogencarbonate + L-glutamine + 2 ATP + H2O = carbamoyl phosphate + L-glutamate + 2 ADP + phosphate + 2 H(+). It carries out the reaction hydrogencarbonate + NH4(+) + 2 ATP = carbamoyl phosphate + 2 ADP + phosphate + 2 H(+). It participates in amino-acid biosynthesis; L-arginine biosynthesis; carbamoyl phosphate from bicarbonate: step 1/1. The protein operates within pyrimidine metabolism; UMP biosynthesis via de novo pathway; (S)-dihydroorotate from bicarbonate: step 1/3. Large subunit of the glutamine-dependent carbamoyl phosphate synthetase (CPSase). CPSase catalyzes the formation of carbamoyl phosphate from the ammonia moiety of glutamine, carbonate, and phosphate donated by ATP, constituting the first step of 2 biosynthetic pathways, one leading to arginine and/or urea and the other to pyrimidine nucleotides. The large subunit (synthetase) binds the substrates ammonia (free or transferred from glutamine from the small subunit), hydrogencarbonate and ATP and carries out an ATP-coupled ligase reaction, activating hydrogencarbonate by forming carboxy phosphate which reacts with ammonia to form carbamoyl phosphate. This is Carbamoyl phosphate synthase large chain, N-terminal section (carB1) from Methanopyrus kandleri (strain AV19 / DSM 6324 / JCM 9639 / NBRC 100938).